A 232-amino-acid polypeptide reads, in one-letter code: Response regulator MprA (232 aa).

One can recognise a Response regulatory domain in the interval 4-118 (RILVVDDDRA…ELLARMRALL (115 aa)). Aspartate 48 carries the 4-aspartylphosphate modification. Residues 131-229 (SVAMTFSDLS…VRGVGYVLRE (99 aa)) constitute a DNA-binding region (ompR/PhoB-type).

Phosphorylated and dephosphorylated by MprB.

The protein localises to the cytoplasm. Its function is as follows. Member of the two-component regulatory system MprB/MprA which contributes to maintaining a balance among several systems involved in stress resistance and is required for establishment and maintenance of persistent infection in the host. Functions as a transcriptional regulator that recognizes a 19-bp nucleotide motif comprizing two loosely conserved 8-bp direct DNA-binding motif repeats separated by a 3-bp spacer region. The sequence is that of Response regulator MprA (mprA) from Mycobacterium ulcerans (strain Agy99).